Reading from the N-terminus, the 234-residue chain is DNA repair protein RecO (234 aa).

It belongs to the RecO family.

Its function is as follows. Involved in DNA repair and RecF pathway recombination. The protein is DNA repair protein RecO of Coxiella burnetii (strain RSA 331 / Henzerling II).